Here is a 1021-residue protein sequence, read N- to C-terminus: Sodium/potassium-transporting ATPase subunit alpha-1 (1021 aa).

The propeptide occupies 1 to 5 (MGKGV). Residues 1 to 11 (MGKGVGRDKYE) are compositionally biased toward basic and acidic residues. The interval 1–37 (MGKGVGRDKYEPAAVSEHGDKKKAKKERDMDELKKEV) is disordered. Residues 6-85 (GRDKYEPAAV…NALTPPPTTP (80 aa)) are Cytoplasmic-facing. K9 is subject to N6-acetyllysine. Y10 is subject to Phosphotyrosine. The residue at position 16 (S16) is a Phosphoserine; by PKC. Residue K21 is modified to N6-acetyllysine. Basic and acidic residues predominate over residues 26–37 (KERDMDELKKEV). A phosphoserine mark is found at S38 and S45. The tract at residues 80–82 (PPP) is phosphoinositide-3 kinase binding. Residues 86–106 (EWVKFCRQLFGGFSMLLWIGA) traverse the membrane as a helical segment. At 107–129 (ILCFLAYGIQAATEEEPQNDNLY) the chain is on the extracellular side. The helical transmembrane segment at 130–150 (LGVVLSAVVIITGCFSYYQEA) threads the bilayer. Topologically, residues 151-286 (KSSKIMESFK…GGQTPIAAEI (136 aa)) are cytoplasmic. The tract at residues 214–233 (SSLTGESEPQTRSPDFTNEN) is disordered. S226 carries the phosphoserine modification. Position 258 is a phosphotyrosine (Y258). Residues 287-306 (EHFIHIITGVAVFLGVSFFI) traverse the membrane as a helical segment. At 307–318 (LSLILEYTWLEA) the chain is on the extracellular side. A helical transmembrane segment spans residues 319 to 336 (VIFLIGIIVANVPEGLLA). Residues 337–770 (TVTVCLTLTA…EEGRLIFDNL (434 aa)) are Cytoplasmic-facing. D374 functions as the 4-aspartylphosphate intermediate in the catalytic mechanism. Residues S450 and S482 each carry the phosphoserine modification. Residue K485 coordinates ATP. A Phosphotyrosine modification is found at Y540. Positions 594 to 715 (RAAVPDAVGK…QGAIVAVTGD (122 aa)) are mediates interaction with SCN7A. N6-succinyllysine is present on K659. S666 and S673 each carry phosphoserine. Mg(2+) contacts are provided by D715 and D719. Residues 771-790 (KKSIAYTLTSNIPEITPFLI) traverse the membrane as a helical segment. The Extracellular portion of the chain corresponds to 791-800 (FIIANIPLPL). Residues 801–821 (GTVTILCIDLGTDMVPAISLA) traverse the membrane as a helical segment. Topologically, residues 822–841 (YEQAESDIMKRQPRNPKTDK) are cytoplasmic. Residues 842-864 (LVNEQLISMAYGQIGMIQALGGF) traverse the membrane as a helical segment. At 865–916 (FTYFVILAENGFLPIHLLGLRVNWDDRWINDVEDSYGQQWTYEQRKIVEFTC) the chain is on the extracellular side. The helical transmembrane segment at 917–936 (HTPFFVTIVVVQWADLVICK) threads the bilayer. At 937–949 (TRRNSVFQQGMKN) the chain is on the cytoplasmic side. S941 carries the phosphoserine; by PKA modification. Residues 950 to 968 (KILIFGLFEETALAAFLSY) form a helical membrane-spanning segment. Over 969–983 (CPGMGVALRMYPLKP) the chain is Extracellular. A helical transmembrane segment spans residues 984–1004 (TWWFCAFPYSLLIFVYDEVRK). Residues 1005–1021 (LIIRRRPGGWVEKETYY) lie on the Cytoplasmic side of the membrane.

This sequence belongs to the cation transport ATPase (P-type) (TC 3.A.3) family. Type IIC subfamily. As to quaternary structure, the sodium/potassium-transporting ATPase is composed of a catalytic alpha subunit, an auxiliary non-catalytic beta subunit and an additional regulatory subunit. Interacts with regulatory subunit FXYD1. Interacts with regulatory subunit FXYD3. Interacts with SIK1. Interacts with SLC35G1 and STIM1. Interacts with CLN3; this interaction regulates the sodium/potassium-transporting ATPase complex localization at the plasma membrane. Interacts with SCN7A; activates ATP1A1 P-type sodium:potassium-exchanging transporter activity which indirectly signals to nearby neurons to regulate sodium homeostasis. Phosphorylation on Tyr-10 modulates pumping activity. Phosphorylation of Ser-941 by PKA modulates the response of ATP1A1 to PKC. Dephosphorylation by protein phosphatase 2A (PP2A) following increases in intracellular sodium, leading to increase catalytic activity.

The protein resides in the cell membrane. It is found in the basolateral cell membrane. Its subcellular location is the sarcolemma. It localises to the cell projection. The protein localises to the axon. The protein resides in the melanosome. The enzyme catalyses K(+)(out) + Na(+)(in) + ATP + H2O = K(+)(in) + Na(+)(out) + ADP + phosphate + H(+). Its function is as follows. This is the catalytic component of the active enzyme, which catalyzes the hydrolysis of ATP coupled with the exchange of sodium and potassium ions across the plasma membrane. This action creates the electrochemical gradient of sodium and potassium ions, providing the energy for active transport of various nutrients. Could also be part of an osmosensory signaling pathway that senses body-fluid sodium levels and controls salt intake behavior as well as voluntary water intake to regulate sodium homeostasis. The protein is Sodium/potassium-transporting ATPase subunit alpha-1 (ATP1A1) of Sus scrofa (Pig).